The sequence spans 1063 residues: MASTTPITMEDLQKALETQSRALRAELAAGASQSRRPRPPRQRDSSTTGDDSGRDSGGPRRRRGNRGRGQRRDWSRAPPPPEERQETRSQTPAPKPSRAPPQQPQPPRMQTGRGGSAPRPELGPPTNPFQAAVARGLRPPLHDPDTEAPTEACVTSWLWSEGEGAVFYRVDLHFTNLGTPPLDEDGRWDPALMYNPCGPEPPAHVVRAYNQPAGDVRGVWGKGERTYAEQDFRVGGTRWHRLLRMPVRGLDGDSAPLPPHTTERIETRSARHPWRIRFGAPQAFLAGLLLAAVAVGTARAGLQPRADMAAPPTLPQPPRAHGQHYGHHHHQLPFLGHDGHHGGTLRVGQHHRNASDVLPGHWLQGGWGCYNLSDWHQGTHVCHTKHMDFWCVEHDRPPPATPTPLTTAANSTTAATPATAPAPCHAGLNDSCGGFLSGCGPMRLRHGADTRCGRLICGLSTTAQYPPTRFGCAMRWGLPPWELVVLTARPEDGWTCRGVPAHPGTRCPELVSPMGRATCSPASALWLATANALSLDHALAAFVLLVPWVLIFMVCRRTCRRRGAAAALTAVVLQGYNPPAYGEEAFTYLCTAPGCATQAPVPVRLAGVRFESKIVDGGCFAPWDLEATGACICEIPTDVSCEGLGAWVPTAPCARIWNGTQRACTFWAVNAYSSGGYAQLASYFNPGGSYYKQYHPTACEVEPAFGHSDAACWGFPTDTVMSVFALASYVQHPHKTVRVKFHTETRTVWQLSVAGVSCNVTTEHPFCNTPHGQLEVQVPPDPGDLVEYIMNHTGNQQSRWGLGSPNCHGPDWASPVCQRHSPDCSRLVGATPERPRLRLVDADDPLLRTAPGPGEVWVTPVIGSQARKCGLHIRAGPYGHATVEMPEWIHAHTTSDPWHPPGPLGLKFKTVRPVALPRTLAPPRNVRVTGCYQCGTPALVEGLAPGGGNCHLTVNGEDLGAFPPGKFVTAALLNTPPPYQVSCGGESDRASARVIDPAAQSFTGVVYGTHTTAVSETRQTWAEWAAAHWWQLTLGAICALLLAGLLACCAKCLYYLRGAIAPR.

Residues 1-131 are disordered; sequence MASTTPITME…LGPPTNPFQA (131 aa). The segment at 30-69 is human C1QBP/SF2P32-binding; it reads GASQSRRPRPPRQRDSSTTGDDSGRDSGGPRRRRGNRGRG. Position 46 is a phosphoserine; by host (serine 46). A compositionally biased stretch (basic residues) spans 59-69; the sequence is PRRRRGNRGRG. The segment covering 70–87 has biased composition (basic and acidic residues); that stretch reads QRRDWSRAPPPPEERQET. Over residues 93-107 the composition is skewed to pro residues; that stretch reads APKPSRAPPQQPQPP. Cysteines 153 and 197 form a disulfide. The functions as E2 signal peptide stretch occupies residues 279–300; the sequence is GAPQAFLAGLLLAAVAVGTARA. At 301-534 the chain is on the extracellular side; that stretch reads GLQPRADMAA…LWLATANALS (234 aa). 4 N-linked (GlcNAc...) asparagine; by host glycosylation sites follow: asparagine 353, asparagine 371, asparagine 410, and asparagine 429. The helical transmembrane segment at 535–555 threads the bilayer; sequence LDHALAAFVLLVPWVLIFMVC. The Cytoplasmic portion of the chain corresponds to 556-582; it reads RRTCRRRGAAAALTAVVLQGYNPPAYG. Residues 563 to 582 form a functions as E1 signal peptide region; that stretch reads GAAAALTAVVLQGYNPPAYG. At 583–1028 the chain is on the extracellular side; sequence EEAFTYLCTA…QTWAEWAAAH (446 aa). Intrachain disulfides connect cysteine 590–cysteine 595, cysteine 619–cysteine 824, cysteine 641–cysteine 653, cysteine 699–cysteine 712, cysteine 758–cysteine 767, cysteine 807–cysteine 817, cysteine 931–cysteine 934, and cysteine 950–cysteine 983. The N-linked (GlcNAc...) asparagine; by host glycan is linked to asparagine 658. Ca(2+)-binding residues include asparagine 670 and alanine 671. The Ca(2+) site is built by aspartate 718 and threonine 719. N-linked (GlcNAc...) asparagine; by host glycosylation is found at asparagine 759 and asparagine 791. O-linked (GalNAc...) threonine; by host glycosylation is found at threonine 1011 and threonine 1012. The chain crosses the membrane as a helical span at residues 1029–1049; the sequence is WWQLTLGAICALLLAGLLACC. Topologically, residues 1050–1063 are extracellular; that stretch reads AKCLYYLRGAIAPR.

Homodimer; further assembles into homooligomer. Interacts with human C1QBP. Interacts (via N-terminus) with protease/methyltransferase p150. In terms of assembly, heterodimer with spike glycoprotein E2. As to quaternary structure, heterodimer with spike glycoprotein E1. In terms of processing, structural polyprotein: Specific enzymatic cleavages in vivo yield mature proteins. Two signal peptidase-mediated cleavages within the polyprotein produce the structural proteins capsid, E2, and E1. The E2 signal peptide remains attached to the C-terminus of the capsid protein after cleavage by the signal peptidase. Another signal peptide at E2 C-terminus directs E1 to the ER, with a similar mechanism. Post-translationally, contains three N-linked oligosaccharides. Capsid is phosphorylated on Ser-46 by host. This phosphorylation negatively regulates capsid protein RNA-binding activity. Dephosphorylated by human PP1A.

It localises to the virion. The protein resides in the host cytoplasm. The protein localises to the host mitochondrion. It is found in the virion membrane. Its subcellular location is the host Golgi apparatus membrane. Its function is as follows. Capsid protein interacts with genomic RNA and assembles into icosahedric core particles 65-70 nm in diameter. The resulting nucleocapsid eventually associates with the cytoplasmic domain of E2 at the cell membrane, leading to budding and formation of mature virions from host Golgi membranes. Phosphorylation negatively regulates RNA-binding activity, possibly delaying virion assembly during the viral replication phase. Capsid protein dimerizes and becomes disulfide-linked in the virion. Modulates genomic RNA replication. Modulates subgenomic RNA synthesis by interacting with human C1QBP/SF2P32. Induces both perinuclear clustering of mitochondria and the formation of electron-dense intermitochondrial plaques, both hallmarks of rubella virus infected cells. Induces apoptosis when expressed in transfected cells. In terms of biological role, responsible for viral attachment to target host cell, by binding to the cell receptor. Its transport to the plasma membrane depends on interaction with E1 protein. The surface glycoproteins display an irregular helical organization and a pseudo-tetrameric inner nucleocapsid arrangement. Functionally, class II viral fusion protein. Fusion activity is inactive as long as E1 is bound to E2 in mature virion. After virus attachment to target cell and clathrin-mediated endocytosis, acidification of the endosome would induce dissociation of E1/E2 heterodimer and concomitant trimerization of the E1 subunits. This E1 homotrimer is fusion active, and promotes release of viral nucleocapsid in cytoplasm after endosome and viral membrane fusion. The cytoplasmic tail of spike glycoprotein E1 modulates virus release. The surface glycoproteins display an irregular helical organization and a pseudo-tetrameric inner nucleocapsid arrangement. The protein is Structural polyprotein of Homo sapiens (Human).